We begin with the raw amino-acid sequence, 177 residues long: Large ribosomal subunit protein uL6 (177 aa).

The protein belongs to the universal ribosomal protein uL6 family. Part of the 50S ribosomal subunit.

Its function is as follows. This protein binds to the 23S rRNA, and is important in its secondary structure. It is located near the subunit interface in the base of the L7/L12 stalk, and near the tRNA binding site of the peptidyltransferase center. The polypeptide is Large ribosomal subunit protein uL6 (Dichelobacter nodosus (strain VCS1703A)).